Consider the following 900-residue polypeptide: Translation initiation factor IF-2 (900 aa).

3 stretches are compositionally biased toward basic and acidic residues: residues 119-158, 165-191, and 198-229; these read AAKA…EKQE, ADEK…KADA, and EEAR…DHHV. The tract at residues 119–306 is disordered; that stretch reads AAKAEAEAKA…NARSVAPESM (188 aa). Over residues 257–272 the composition is skewed to low complexity; it reads SANAGNNANSNSNAGS. The 170-residue stretch at 400–569 folds into the tr-type G domain; the sequence is PRAPVVTIMG…LLESEVLELK (170 aa). The interval 409-416 is G1; that stretch reads GHVDHGKT. 409–416 serves as a coordination point for GTP; that stretch reads GHVDHGKT. Residues 434–438 are G2; that stretch reads GITQH. The interval 455–458 is G3; the sequence is DTPG. GTP is bound by residues 455–459 and 509–512; these read DTPGH and NKID. A G4 region spans residues 509–512; it reads NKID. Residues 545–547 form a G5 region; the sequence is SAK.

This sequence belongs to the TRAFAC class translation factor GTPase superfamily. Classic translation factor GTPase family. IF-2 subfamily.

It is found in the cytoplasm. Its function is as follows. One of the essential components for the initiation of protein synthesis. Protects formylmethionyl-tRNA from spontaneous hydrolysis and promotes its binding to the 30S ribosomal subunits. Also involved in the hydrolysis of GTP during the formation of the 70S ribosomal complex. The protein is Translation initiation factor IF-2 of Shewanella piezotolerans (strain WP3 / JCM 13877).